A 211-amino-acid chain; its full sequence is Glutathione S-transferase class-mu 28 kDa isozyme (211 aa).

A2 is subject to N-acetylalanine. The 83-residue stretch at 4–86 (EHIKVIYFDG…YMAKKHHMMG (83 aa)) folds into the GST N-terminal domain. Residues Y10, 10 to 11 (YF), R16, 41 to 45 (WPKIK), L53, 55 to 56 (AV), and 70 to 71 (ES) contribute to the glutathione site. The region spanning 88–211 (TDEEYYSVEK…YLSNRPATPF (124 aa)) is the GST C-terminal domain.

Belongs to the GST superfamily. Mu family. In terms of assembly, homodimer. As to expression, in the adult, expressed in excretory epithelial cells but absent from the caecal epithelium and flame cells. Also expressed in the tegument and its extensions into the parenchyma. In the schistosomulum, expressed in the tegument and associated structures. Not expressed in digestive tract, reproductive organs or muscles (at protein level).

The catalysed reaction is RX + glutathione = an S-substituted glutathione + a halide anion + H(+). Functionally, conjugation of reduced glutathione to a wide number of exogenous and endogenous hydrophobic electrophiles. GST isoenzymes appear to play a central role in the parasite detoxification system. Other functions are also suspected including a role in increasing the solubility of haematin in the parasite gut. The polypeptide is Glutathione S-transferase class-mu 28 kDa isozyme (GST28) (Schistosoma mansoni (Blood fluke)).